A 660-amino-acid polypeptide reads, in one-letter code: Protein NEDD1 (660 aa).

8 WD repeats span residues 1–31 (MQEN…FNPH), 32–71 (TSPH…PVPL), 75–114 (AEGQ…VHRS), 117–156 (DHKD…SSTP), 160–200 (GSNQ…PYHN), 204–244 (VHKA…LVKT), 246–285 (VADT…SPVK), and 289–332 (AHKT…NAAS). S325 is subject to Phosphoserine. A disordered region spans residues 369-411 (QEKAGLPRSINTDTLSKETDSGKNQDFSSFDDTGKSSLGDMFS). T382 carries the phosphothreonine; by PLK1 modification. A Phosphoserine; by PLK1 modification is found at S397. Residue S411 is modified to Phosphoserine. Position 426 is a phosphoserine; by PLK1 (S426). Phosphoserine occurs at positions 468 and 516. A compositionally biased stretch (polar residues) spans 507-523 (GAESGNLNTSPSSNQTR). Positions 507-532 (GAESGNLNTSPSSNQTRNSEKFEKPE) are disordered. T550 is subject to Phosphothreonine; by CDK1. S637 is subject to Phosphoserine; by PLK1.

Interacts with FAM29A. Interacts with HSPA1A and HSPA1B. Interacts with gamma-tubulin in a HSPA1A/B-dependent manner. In terms of processing, during mitosis, prior phosphorylation on Thr-550 by CDK1 promotes subsequent phosphorylation by PLK1 on Thr-382, Ser-397, Ser-426 and Ser-637. Phosphorylated NEDD1 can interact with gamma-tubulin for targeting the gamma-tubulin ring complex (gTuRC) to the centrosome, an important step for spindle formation.

Its subcellular location is the cytoplasm. The protein localises to the cytoskeleton. It is found in the microtubule organizing center. It localises to the centrosome. Its function is as follows. Required for mitosis progression. Promotes the nucleation of microtubules from the spindle. The sequence is that of Protein NEDD1 (NEDD1) from Homo sapiens (Human).